The chain runs to 37 residues: Cytochrome b6-f complex subunit 5 (37 aa).

A helical membrane pass occupies residues 5–25 (LLCGIVLGLVPVTIAGLFVTA).

The protein belongs to the PetG family. In terms of assembly, the 4 large subunits of the cytochrome b6-f complex are cytochrome b6, subunit IV (17 kDa polypeptide, PetD), cytochrome f and the Rieske protein, while the 4 small subunits are PetG, PetL, PetM and PetN. The complex functions as a dimer.

Its subcellular location is the plastid. The protein resides in the chloroplast thylakoid membrane. In terms of biological role, component of the cytochrome b6-f complex, which mediates electron transfer between photosystem II (PSII) and photosystem I (PSI), cyclic electron flow around PSI, and state transitions. PetG is required for either the stability or assembly of the cytochrome b6-f complex. The polypeptide is Cytochrome b6-f complex subunit 5 (Chlamydomonas reinhardtii (Chlamydomonas smithii)).